The following is a 318-amino-acid chain: Ribonuclease Z (318 aa).

Residues H62, H64, D66, H67, H144, D215, and H273 each coordinate Zn(2+). D66 acts as the Proton acceptor in catalysis.

The protein belongs to the RNase Z family. In terms of assembly, homodimer. Zn(2+) serves as cofactor.

It catalyses the reaction Endonucleolytic cleavage of RNA, removing extra 3' nucleotides from tRNA precursor, generating 3' termini of tRNAs. A 3'-hydroxy group is left at the tRNA terminus and a 5'-phosphoryl group is left at the trailer molecule.. Zinc phosphodiesterase, which displays some tRNA 3'-processing endonuclease activity. Probably involved in tRNA maturation, by removing a 3'-trailer from precursor tRNA. The chain is Ribonuclease Z from Prochlorococcus marinus (strain MIT 9303).